A 179-amino-acid chain; its full sequence is Acireductone dioxygenase (179 aa).

Residues 1–21 (MVQAWYMDDSTEDQRKPHHLQ) are disordered. Histidine 88, histidine 90, glutamate 94, and histidine 133 together coordinate Fe(2+). Residues histidine 88, histidine 90, glutamate 94, and histidine 133 each coordinate Ni(2+).

Belongs to the acireductone dioxygenase (ARD) family. As to quaternary structure, monomer. Interacts with MMP14. It depends on Fe(2+) as a cofactor. The cofactor is Ni(2+).

The protein resides in the cytoplasm. It is found in the nucleus. Its subcellular location is the cell membrane. It carries out the reaction 1,2-dihydroxy-5-(methylsulfanyl)pent-1-en-3-one + O2 = 4-methylsulfanyl-2-oxobutanoate + formate + 2 H(+). It catalyses the reaction 1,2-dihydroxy-5-(methylsulfanyl)pent-1-en-3-one + O2 = 3-(methylsulfanyl)propanoate + CO + formate + 2 H(+). It participates in amino-acid biosynthesis; L-methionine biosynthesis via salvage pathway; L-methionine from S-methyl-5-thio-alpha-D-ribose 1-phosphate: step 5/6. Functionally, catalyzes 2 different reactions between oxygen and the acireductone 1,2-dihydroxy-3-keto-5-methylthiopentene (DHK-MTPene) depending upon the metal bound in the active site. Fe-containing acireductone dioxygenase (Fe-ARD) produces formate and 2-keto-4-methylthiobutyrate (KMTB), the alpha-ketoacid precursor of methionine in the methionine recycle pathway. Ni-containing acireductone dioxygenase (Ni-ARD) produces methylthiopropionate, carbon monoxide and formate, and does not lie on the methionine recycle pathway. This Xenopus tropicalis (Western clawed frog) protein is Acireductone dioxygenase (adi1).